Consider the following 98-residue polypeptide: Large ribosomal subunit protein uL23 (98 aa).

It belongs to the universal ribosomal protein uL23 family. Part of the 50S ribosomal subunit. Contacts protein L29, and trigger factor when it is bound to the ribosome.

In terms of biological role, one of the early assembly proteins it binds 23S rRNA. One of the proteins that surrounds the polypeptide exit tunnel on the outside of the ribosome. Forms the main docking site for trigger factor binding to the ribosome. The protein is Large ribosomal subunit protein uL23 of Streptococcus gordonii (strain Challis / ATCC 35105 / BCRC 15272 / CH1 / DL1 / V288).